A 213-amino-acid polypeptide reads, in one-letter code: Large ribosomal subunit protein uL1 (213 aa).

Belongs to the universal ribosomal protein uL1 family. Part of the 50S ribosomal subunit.

Its function is as follows. Binds directly to 23S rRNA. Probably involved in E site tRNA release. In terms of biological role, protein L1 is also a translational repressor protein, it controls the translation of its operon by binding to its mRNA. The sequence is that of Large ribosomal subunit protein uL1 from Methanosarcina acetivorans (strain ATCC 35395 / DSM 2834 / JCM 12185 / C2A).